A 73-amino-acid polypeptide reads, in one-letter code: MAKEELVEFGGRVSEVLPDSRFRVTLENGFEVWAYSSGRLKKNRIRILAGDRVTLEMSPYDLTKGRINYRHKV.

The S1-like domain maps to 1–72 (MAKEELVEFG…TKGRINYRHK (72 aa)).

Belongs to the IF-1 family. Component of the 30S ribosomal translation pre-initiation complex which assembles on the 30S ribosome in the order IF-2 and IF-3, IF-1 and N-formylmethionyl-tRNA(fMet); mRNA recruitment can occur at any time during PIC assembly.

It is found in the cytoplasm. Its function is as follows. One of the essential components for the initiation of protein synthesis. Stabilizes the binding of IF-2 and IF-3 on the 30S subunit to which N-formylmethionyl-tRNA(fMet) subsequently binds. Helps modulate mRNA selection, yielding the 30S pre-initiation complex (PIC). Upon addition of the 50S ribosomal subunit IF-1, IF-2 and IF-3 are released leaving the mature 70S translation initiation complex. The polypeptide is Translation initiation factor IF-1 3 (Cupriavidus pinatubonensis (strain JMP 134 / LMG 1197) (Cupriavidus necator (strain JMP 134))).